We begin with the raw amino-acid sequence, 181 residues long: Probable cobalt-precorrin-6B C(15)-methyltransferase (decarboxylating) (181 aa).

S-adenosyl-L-methionine is bound by residues Thr-16, 40–44 (GCGSG), Asp-61, and Ala-89.

Belongs to the methyltransferase superfamily. Archaeal-type CbiT family.

It catalyses the reaction Co-precorrin-6B + S-adenosyl-L-methionine = Co-precorrin-7 + S-adenosyl-L-homocysteine + CO2. Its pathway is cofactor biosynthesis; adenosylcobalamin biosynthesis; cob(II)yrinate a,c-diamide from sirohydrochlorin (anaerobic route): step 8/10. In terms of biological role, catalyzes the methylation of C-15 in cobalt-precorrin-6B followed by the decarboxylation of C-12 to form cobalt-precorrin-7. The polypeptide is Probable cobalt-precorrin-6B C(15)-methyltransferase (decarboxylating) (Methanococcus maripaludis (strain C5 / ATCC BAA-1333)).